The sequence spans 252 residues: tRNA1(Val) (adenine(37)-N6)-methyltransferase (252 aa).

It belongs to the methyltransferase superfamily. tRNA (adenine-N(6)-)-methyltransferase family.

The protein resides in the cytoplasm. The enzyme catalyses adenosine(37) in tRNA1(Val) + S-adenosyl-L-methionine = N(6)-methyladenosine(37) in tRNA1(Val) + S-adenosyl-L-homocysteine + H(+). Functionally, specifically methylates the adenine in position 37 of tRNA(1)(Val) (anticodon cmo5UAC). This Proteus mirabilis (strain HI4320) protein is tRNA1(Val) (adenine(37)-N6)-methyltransferase.